The sequence spans 391 residues: Phosphoglycerate kinase (391 aa).

Residues 21–23, Arg36, 59–62, Arg113, and Arg146 contribute to the substrate site; these read DLN and HLGR. Residues Lys197, Glu319, and 345–348 each bind ATP; that span reads GGDT.

Belongs to the phosphoglycerate kinase family. In terms of assembly, monomer.

It localises to the cytoplasm. It catalyses the reaction (2R)-3-phosphoglycerate + ATP = (2R)-3-phospho-glyceroyl phosphate + ADP. It participates in carbohydrate degradation; glycolysis; pyruvate from D-glyceraldehyde 3-phosphate: step 2/5. This Shewanella frigidimarina (strain NCIMB 400) protein is Phosphoglycerate kinase.